We begin with the raw amino-acid sequence, 116 residues long: U30-theraphotoxin-Cg1b (116 aa).

The signal sequence occupies residues 1 to 17 (MKLCVLTIATLLVTATS). The propeptide occupies 18 to 53 (LETQKEIAEGNELTREETPSLVEHKEDEAAAASEKR). A disordered region spans residues 25–45 (AEGNELTREETPSLVEHKEDE). Intrachain disulfides connect Cys55-Cys69, Cys62-Cys75, Cys66-Cys112, and Cys68-Cys88.

This sequence belongs to the neurotoxin 03 (Tx2) family. 02 subfamily. Expressed by the venom gland.

It is found in the secreted. Probable ion channel inhibitor. The sequence is that of U30-theraphotoxin-Cg1b from Chilobrachys guangxiensis (Chinese earth tiger tarantula).